Here is a 135-residue protein sequence, read N- to C-terminus: Interleukin-4 (135 aa).

The signal sequence occupies residues 1 to 24 (MGLTYQLIPVLVCLLVCTSHFVHG). 3 disulfide bridges follow: Cys27–Cys135, Cys48–Cys85, and Cys70–Cys105. Asn62 is a glycosylation site (N-linked (GlcNAc...) asparagine).

The protein belongs to the IL-4/IL-13 family.

The protein localises to the secreted. Functionally, participates in at least several B-cell activation processes as well as of other cell types. It is a costimulator of DNA-synthesis. It induces the expression of class II MHC molecules on resting B-cells. It enhances both secretion and cell surface expression of IgE and IgG1. It also regulates the expression of the low affinity Fc receptor for IgE (CD23) on both lymphocytes and monocytes. Positively regulates IL31RA expression in macrophages. Stimulates autophagy in dendritic cells by interfering with mTORC1 signaling and through the induction of RUFY4. This Bubalus carabanensis (Swamp type water buffalo) protein is Interleukin-4 (IL4).